Consider the following 387-residue polypeptide: Sorting nexin-7 (387 aa).

Residues Lys-30–Leu-151 enclose the PX domain. A 1,2-diacyl-sn-glycero-3-phospho-(1D-myo-inositol-3-phosphate) contacts are provided by Arg-73, Gln-75, Lys-103, and Arg-117. One can recognise a BAR domain in the interval Gly-178–Leu-387.

Belongs to the sorting nexin family. Heterodimer; heterodimerizes with SNX4.

Its subcellular location is the early endosome membrane. In terms of biological role, involved in the regulation of endocytosis and in several stages of intracellular trafficking. Together with SNX4, involved in autophagosome assembly by regulating trafficking and recycling of phospholipid scramblase ATG9A. In Mus musculus (Mouse), this protein is Sorting nexin-7.